A 321-amino-acid polypeptide reads, in one-letter code: Lipoyl synthase (321 aa).

Residues 1–21 (MRHRWEDRPVAPPPDGRPTEY) form a disordered region. Cysteine 63, cysteine 68, cysteine 74, cysteine 89, cysteine 93, cysteine 96, and serine 302 together coordinate [4Fe-4S] cluster. In terms of domain architecture, Radical SAM core spans 75–291 (WNNRTATFMI…KKLGLEMGFS (217 aa)). The segment at 301-321 (SSYHAHEQTEDARRGALGARG) is disordered. Positions 304 to 314 (HAHEQTEDARR) are enriched in basic and acidic residues.

Belongs to the radical SAM superfamily. Lipoyl synthase family. [4Fe-4S] cluster serves as cofactor.

Its subcellular location is the cytoplasm. The enzyme catalyses [[Fe-S] cluster scaffold protein carrying a second [4Fe-4S](2+) cluster] + N(6)-octanoyl-L-lysyl-[protein] + 2 oxidized [2Fe-2S]-[ferredoxin] + 2 S-adenosyl-L-methionine + 4 H(+) = [[Fe-S] cluster scaffold protein] + N(6)-[(R)-dihydrolipoyl]-L-lysyl-[protein] + 4 Fe(3+) + 2 hydrogen sulfide + 2 5'-deoxyadenosine + 2 L-methionine + 2 reduced [2Fe-2S]-[ferredoxin]. It functions in the pathway protein modification; protein lipoylation via endogenous pathway; protein N(6)-(lipoyl)lysine from octanoyl-[acyl-carrier-protein]: step 2/2. Its function is as follows. Catalyzes the radical-mediated insertion of two sulfur atoms into the C-6 and C-8 positions of the octanoyl moiety bound to the lipoyl domains of lipoate-dependent enzymes, thereby converting the octanoylated domains into lipoylated derivatives. The chain is Lipoyl synthase from Rubrobacter xylanophilus (strain DSM 9941 / JCM 11954 / NBRC 16129 / PRD-1).